We begin with the raw amino-acid sequence, 262 residues long: Acyl-[acyl-carrier-protein]--UDP-N-acetylglucosamine O-acyltransferase (262 aa).

The protein belongs to the transferase hexapeptide repeat family. LpxA subfamily. As to quaternary structure, homotrimer.

It localises to the cytoplasm. It catalyses the reaction a (3R)-hydroxyacyl-[ACP] + UDP-N-acetyl-alpha-D-glucosamine = a UDP-3-O-[(3R)-3-hydroxyacyl]-N-acetyl-alpha-D-glucosamine + holo-[ACP]. The protein operates within glycolipid biosynthesis; lipid IV(A) biosynthesis; lipid IV(A) from (3R)-3-hydroxytetradecanoyl-[acyl-carrier-protein] and UDP-N-acetyl-alpha-D-glucosamine: step 1/6. Involved in the biosynthesis of lipid A, a phosphorylated glycolipid that anchors the lipopolysaccharide to the outer membrane of the cell. This is Acyl-[acyl-carrier-protein]--UDP-N-acetylglucosamine O-acyltransferase from Haemophilus influenzae (strain PittEE).